A 126-amino-acid chain; its full sequence is MSMQIEIKDGRSDNSPLPERKLVTLIQESYDSLKDDNEINLSTESTSNLLIKLVLEKLEKHSSLYKYIASVTTLNIEGLNEENANFSLKNDIGASWESKKDGIFNYKLEDKNNNECYLITILWLHK.

The residue at position 2 (Ser-2) is an N-acetylserine.

It belongs to the TDA2 family.

It is found in the cytoplasm. The protein localises to the cell projection. This Saccharomyces cerevisiae (strain JAY291) (Baker's yeast) protein is Topoisomerase I damage affected protein 2 (TDA2).